Consider the following 126-residue polypeptide: Fatty acid-binding protein 2, liver (126 aa).

Cholate contacts are provided by residues 54–56 (TPN), 99–101 (HIQ), and Arg-121.

This sequence belongs to the calycin superfamily. Fatty-acid binding protein (FABP) family.

The protein resides in the cytoplasm. Binds free fatty acids and their coenzyme A derivatives, bilirubin, and some other small molecules in the cytoplasm. May be involved in intracellular lipid transport. The specificity of axolotl L-FABP differs from that of LB-FABP. Binds 2 ligands per protein molecule. This is Fatty acid-binding protein 2, liver from Ambystoma mexicanum (Axolotl).